The sequence spans 73 residues: DNA-directed RNA polymerase subunit omega (73 aa).

The protein belongs to the RNA polymerase subunit omega family. The RNAP catalytic core consists of 2 alpha, 1 beta, 1 beta' and 1 omega subunit. When a sigma factor is associated with the core the holoenzyme is formed, which can initiate transcription.

The catalysed reaction is RNA(n) + a ribonucleoside 5'-triphosphate = RNA(n+1) + diphosphate. Functionally, promotes RNA polymerase assembly. Latches the N- and C-terminal regions of the beta' subunit thereby facilitating its interaction with the beta and alpha subunits. The sequence is that of DNA-directed RNA polymerase subunit omega from Lactobacillus delbrueckii subsp. bulgaricus (strain ATCC BAA-365 / Lb-18).